We begin with the raw amino-acid sequence, 737 residues long: Alpha-adducin (737 aa).

Position 1 is an N-acetylmethionine (M1). Residues 1–21 (MNGDSRAAVVTSPPPTTAPHK) are disordered. Residue S12 is modified to Phosphoserine. S59 bears the Phosphoserine; by PKA mark. S64 bears the Phosphoserine mark. Phosphothreonine is present on T331. S334, S353, S355, S358, and S366 each carry phosphoserine. At S408 the chain carries Phosphoserine; by PKA. Disordered stretches follow at residues 421-486 (FASD…SAVP) and 576-737 (RREV…KSDS). S427 is modified (phosphoserine). Phosphothreonine is present on T429. Residue S431 is modified to Phosphoserine. A Phosphoserine; by PKA modification is found at S436. A Phosphothreonine; by ROCK2 modification is found at T445. Phosphoserine occurs at positions 464 and 465. Position 480 is a phosphothreonine; by ROCK2 (T480). S481 carries the post-translational modification Phosphoserine; by PKA. The span at 576-601 (RREVERKQKGSEENLDEAREQKEKSP) shows a compositional bias: basic and acidic residues. A phosphoserine mark is found at S586, S600, and S613. Residues 602–614 (PDQPAVPHPPPST) are compositionally biased toward pro residues. T614 carries the phosphothreonine modification. Phosphoserine occurs at positions 678, 707, 710, and 714. Residues 687–714 (PVAEEAAPSAVEEGAAADPGSDGSPGKS) are compositionally biased toward low complexity. Over residues 715–737 (PSKKKKKFRTPSFLKKSKKKSDS) the composition is skewed to basic residues. S716 carries the phosphoserine; by PKC modification. The tract at residues 717–734 (KKKKKFRTPSFLKKSKKK) is interaction with calmodulin. A Phosphoserine; by PKA and PKC modification is found at S726.

Belongs to the aldolase class II family. Adducin subfamily. In terms of assembly, heterodimer of an alpha and a beta subunit or an alpha and a gamma subunit. Expressed in all tissues. Found in much higher levels in reticulocytes than the beta subunit.

It localises to the cytoplasm. Its subcellular location is the cytoskeleton. The protein resides in the cell membrane. Its function is as follows. Membrane-cytoskeleton-associated protein that promotes the assembly of the spectrin-actin network. Binds to calmodulin. This chain is Alpha-adducin (ADD1), found in Homo sapiens (Human).